The sequence spans 330 residues: Aspartate--ammonia ligase (330 aa).

This sequence belongs to the class-II aminoacyl-tRNA synthetase family. AsnA subfamily.

It is found in the cytoplasm. The catalysed reaction is L-aspartate + NH4(+) + ATP = L-asparagine + AMP + diphosphate + H(+). It participates in amino-acid biosynthesis; L-asparagine biosynthesis; L-asparagine from L-aspartate (ammonia route): step 1/1. This is Aspartate--ammonia ligase from Salmonella agona (strain SL483).